We begin with the raw amino-acid sequence, 635 residues long: DNA primase (635 aa).

The segment at 41–65 (CPFHDEKSPSFSVSPAKQMYYCFGC) adopts a CHC2-type zinc-finger fold. The Toprim domain maps to 265 to 348 (DEAILVEGYF…SGQVNLRILN (84 aa)). Residues glutamate 271, aspartate 317, and aspartate 319 each contribute to the Mg(2+) site.

It belongs to the DnaG primase family. As to quaternary structure, monomer. Interacts with DnaB. Zn(2+) is required as a cofactor. Mg(2+) serves as cofactor.

The catalysed reaction is ssDNA + n NTP = ssDNA/pppN(pN)n-1 hybrid + (n-1) diphosphate.. Its function is as follows. RNA polymerase that catalyzes the synthesis of short RNA molecules used as primers for DNA polymerase during DNA replication. In Synechocystis sp. (strain ATCC 27184 / PCC 6803 / Kazusa), this protein is DNA primase.